We begin with the raw amino-acid sequence, 224 residues long: Uracil-DNA glycosylase 2 (224 aa).

Catalysis depends on Asp-64, which acts as the Proton acceptor.

It belongs to the uracil-DNA glycosylase (UDG) superfamily. UNG family.

The protein resides in the cytoplasm. It carries out the reaction Hydrolyzes single-stranded DNA or mismatched double-stranded DNA and polynucleotides, releasing free uracil.. In terms of biological role, excises uracil residues from the DNA which can arise as a result of misincorporation of dUMP residues by DNA polymerase or due to deamination of cytosine. This is Uracil-DNA glycosylase 2 from Listeria innocua serovar 6a (strain ATCC BAA-680 / CLIP 11262).